The sequence spans 442 residues: Urokinase-type plasminogen activator (442 aa).

The first 20 residues, 1-20, serve as a signal peptide directing secretion; the sequence is MRVLRACLSLCVLVVSDSKG. Positions 29–65 constitute an EGF-like domain; it reads GASNCGCLNGGKCVSYKYFSNIQRCSCPKKFQGEHCE. Intrachain disulfides connect C33–C41, C35–C53, C55–C64, C72–C153, C93–C135, C124–C148, C179–C310, C220–C236, C228–C299, C324–C393, C356–C372, and C383–C411. Positions 36–59 are binds urokinase plasminogen activator surface receptor; that stretch reads LNGGKCVSYKYFSNIQRCSCPKKF. Residues 72–153 form the Kringle domain; that stretch reads CFEGNGHSYR…LVQECMVPNC (82 aa). An N-linked (GlcNAc...) asparagine glycan is attached at N152. The interval 154 to 189 is connecting peptide; sequence SGGESHRPAYDGKNPFSTPEKVEFQCGQKALRPRFK. Residues 190 to 435 enclose the Peptidase S1 domain; it reads IVGGKSTTIE…FLTWIHTHVG (246 aa). Catalysis depends on charge relay system residues H235 and D286. Residue S387 is the Charge relay system of the active site.

It belongs to the peptidase S1 family. Found in high and low molecular mass forms. Each consists of two chains, A and B. The high molecular mass form contains a long chain A which is cleaved to yield a short chain A. Forms heterodimer with SERPINA5. Binds LRP1B; binding is followed by internalization and degradation. Interacts with MRC2. Interacts with PLAUR. In complex with SERPINE1, interacts with PLAUR/uPAR. Interacts with SORL1 and LRP1, either alone or in complex with SERPINE1; these interactions are abolished in the presence of LRPAP1/RAP. The ternary complex composed of PLAUR-PLAU-PAI1 also interacts with SORLA. Produced as an inactive single-chain protein (pro-uPA or sc-uPA), is processed into the active disulfide-linked two-chain form of PLAU/uPA by a proteolytic event mediated, at least, by TMPRSS4.

It localises to the secreted. It carries out the reaction Specific cleavage of Arg-|-Val bond in plasminogen to form plasmin.. Its activity is regulated as follows. Inhibited by SERPINA5. Inhibited by SERPINE1. Specifically cleaves the zymogen plasminogen to form the active enzyme plasmin. In Sus scrofa (Pig), this protein is Urokinase-type plasminogen activator (PLAU).